The chain runs to 91 residues: MPRSLKKGPFIDLHLLKKVETAVEVKDKKPIKTWSRRSTIFPEMVGLTIAVHNGRQHVPVYVTEDMVGHKLGEFAATRTYRGHAADKKAKR.

It belongs to the universal ribosomal protein uS19 family.

Functionally, protein S19 forms a complex with S13 that binds strongly to the 16S ribosomal RNA. The chain is Small ribosomal subunit protein uS19 from Hahella chejuensis (strain KCTC 2396).